Reading from the N-terminus, the 249-residue chain is MAHSPSRVFAALSPSAGDVYRDENQSVFNRGRKQTHLSAQSNVRVIEVTGCAEISSPPDRACVSISVKNSKENVNDVTNSVTRRLEYILQTARQHDVKEENITVTKHLQRDEDLFHMQAEVLVVFLDFEKMQQARTVLIEKLDKSVCVGDPYYSHSAESLSLLRRRVCLEAVDNARLKASEACCTLGQALGRPLLVREEESREWSSSQQDASGSPLTLHPRTDATLISATSRMFVTFELRPKDNNRRKF.

It belongs to the IRAK1BP1 family.

The protein localises to the cytoplasm. It localises to the nucleus. Functionally, may be part of a signaling pathway that leads to NF-kappa-B activation. This chain is Interleukin-1 receptor-associated kinase 1-binding protein 1 homolog (irak1bp1), found in Danio rerio (Zebrafish).